The primary structure comprises 225 residues: 7-cyano-7-deazaguanine synthase (225 aa).

10–20 (LSGGIDSATAA) provides a ligand contact to ATP. Zn(2+)-binding residues include C191, C199, C202, and C205.

Belongs to the QueC family. Zn(2+) serves as cofactor.

The catalysed reaction is 7-carboxy-7-deazaguanine + NH4(+) + ATP = 7-cyano-7-deazaguanine + ADP + phosphate + H2O + H(+). The protein operates within purine metabolism; 7-cyano-7-deazaguanine biosynthesis. Catalyzes the ATP-dependent conversion of 7-carboxy-7-deazaguanine (CDG) to 7-cyano-7-deazaguanine (preQ(0)). In Prochlorococcus marinus (strain NATL1A), this protein is 7-cyano-7-deazaguanine synthase.